The chain runs to 155 residues: Small ribosomal subunit protein uS8m (155 aa).

It belongs to the universal ribosomal protein uS8 family. As to quaternary structure, component of the mitochondrial small ribosomal subunit (mt-SSU). Mature yeast 74S mitochondrial ribosomes consist of a small (37S) and a large (54S) subunit. The 37S small subunit contains a 15S ribosomal RNA (15S mt-rRNA) and 34 different proteins. The 54S large subunit contains a 21S rRNA (21S mt-rRNA) and 46 different proteins.

Its subcellular location is the mitochondrion. Functionally, component of the mitochondrial ribosome (mitoribosome), a dedicated translation machinery responsible for the synthesis of mitochondrial genome-encoded proteins, including at least some of the essential transmembrane subunits of the mitochondrial respiratory chain. The mitoribosomes are attached to the mitochondrial inner membrane and translation products are cotranslationally integrated into the membrane. The chain is Small ribosomal subunit protein uS8m (MRPS8) from Saccharomyces cerevisiae (strain ATCC 204508 / S288c) (Baker's yeast).